We begin with the raw amino-acid sequence, 326 residues long: Probable magnesium transporter NIPA7 (326 aa).

Topologically, residues 1 to 4 (MVSD) are extracellular. A helical transmembrane segment spans residues 5-25 (NEMGLVLAVSSSVFIGSSFIL). At 26–51 (KKKGLKRAAANGTRAGFGGYTYLLEP) the chain is on the cytoplasmic side. The helical transmembrane segment at 52 to 72 (LWWVGLVTMTFGEIANFVAYV) threads the bilayer. Residues 73–76 (YAPA) lie on the Extracellular side of the membrane. Residues 77–97 (VLVTPLGALSIIISAVLAHFL) form a helical membrane-spanning segment. The Cytoplasmic segment spans residues 98 to 104 (LDEKLRK). A helical transmembrane segment spans residues 105–125 (MGVWGCVCCIVGSVMIVIHAP). The Extracellular segment spans residues 126–142 (QEQTPNSVEEIWKLAMQ). The helical transmembrane segment at 143–163 (PAFLIYVAISMSIVLALILYC) threads the bilayer. Residues 164–169 (EPLCGQ) lie on the Cytoplasmic side of the membrane. Residues 170-190 (TNILVYIGICSLMGSLTVMSI) form a helical membrane-spanning segment. The Extracellular segment spans residues 191–209 (KAVGIAIKLTFEGINQIWY). A helical transmembrane segment spans residues 210–230 (PETWFFAMVAAICVVMQMIYL). The Cytoplasmic segment spans residues 231–240 (NKALDTFNAA). The helical transmembrane segment at 241–261 (IVSPIYYVMFTTLTIVASAIM) threads the bilayer. Residues 262–272 (FKDWNGQNTDS) lie on the Extracellular side of the membrane. A helical membrane pass occupies residues 273 to 293 (IASEICGFITVLTGTVILHST). Residues 294 to 326 (REEEQASPRRMRWQDSGKSFDEEHLTSLYSPEY) are Cytoplasmic-facing.

The protein belongs to the NIPA (TC 2.A.7) family. As to quaternary structure, homodimer.

It localises to the cell membrane. The protein localises to the early endosome. In terms of biological role, acts as a Mg(2+) transporter. Can also transport other divalent cations such as Fe(2+), Sr(2+), Ba(2+), Mn(2+) and Co(2+) but to a much less extent than Mg(2+). The protein is Probable magnesium transporter NIPA7 of Arabidopsis thaliana (Mouse-ear cress).